Consider the following 339-residue polypeptide: Ketol-acid reductoisomerase (NADP(+)) (339 aa).

Residues 1-182 form the KARI N-terminal Rossmann domain; that stretch reads MRVYYDRDAD…GGGRSGIIET (182 aa). NADP(+)-binding positions include 24–27, K48, S51, T53, and 83–86; these read YGSQ and DELQ. H108 is an active-site residue. An NADP(+)-binding site is contributed by G134. Residues 183 to 328 form the KARI C-terminal knotted domain; the sequence is NFREECETDL…AKLRGMMPWI (146 aa). 4 residues coordinate Mg(2+): D191, E195, E227, and E231. S252 is a binding site for substrate.

It belongs to the ketol-acid reductoisomerase family. The cofactor is Mg(2+).

It carries out the reaction (2R)-2,3-dihydroxy-3-methylbutanoate + NADP(+) = (2S)-2-acetolactate + NADPH + H(+). The enzyme catalyses (2R,3R)-2,3-dihydroxy-3-methylpentanoate + NADP(+) = (S)-2-ethyl-2-hydroxy-3-oxobutanoate + NADPH + H(+). The protein operates within amino-acid biosynthesis; L-isoleucine biosynthesis; L-isoleucine from 2-oxobutanoate: step 2/4. It participates in amino-acid biosynthesis; L-valine biosynthesis; L-valine from pyruvate: step 2/4. Functionally, involved in the biosynthesis of branched-chain amino acids (BCAA). Catalyzes an alkyl-migration followed by a ketol-acid reduction of (S)-2-acetolactate (S2AL) to yield (R)-2,3-dihydroxy-isovalerate. In the isomerase reaction, S2AL is rearranged via a Mg-dependent methyl migration to produce 3-hydroxy-3-methyl-2-ketobutyrate (HMKB). In the reductase reaction, this 2-ketoacid undergoes a metal-dependent reduction by NADPH to yield (R)-2,3-dihydroxy-isovalerate. The polypeptide is Ketol-acid reductoisomerase (NADP(+)) (Rhizobium johnstonii (strain DSM 114642 / LMG 32736 / 3841) (Rhizobium leguminosarum bv. viciae)).